The sequence spans 437 residues: O-methyltransferase elcB (437 aa).

Asp269 is a binding site for S-adenosyl-L-methionine. His319 acts as the Proton acceptor in catalysis.

Belongs to the class I-like SAM-binding methyltransferase superfamily. Cation-independent O-methyltransferase family. COMT subfamily.

Its pathway is secondary metabolite biosynthesis. Functionally, O-methyltransferase; part of the gene cluster that mediates the biosynthesis of elsinochrome C, a perelyenequinone phytotoxin structurally similar to cercosporin. The first step of elsinochrome C biosynthesis is performed by the polyketide synthase elcA which catalyzes the formation of nor-toralactone. The starter unit acyltransferase (SAT) domain of elcA initiates polyketide extension by the selective utilization of acetyl-CoA, which is elongated to the heptaketide in the beta-ketoacyl synthase (KS) domain by successive condensations with six malonyl units introduced by the malonyl acyltransferase (MAT) domain. The product template (PT) domain catalyzes C4-C9 and C2-C11 aldol cyclizations and dehydrations to a trihydroxynaphthalene, which is thought to be delivered to the thioesterase (TE) domain for product release. The bifunctional enzyme elcB then methylates nor-toralactone to toralactone before conducting an unusual oxidative aromatic ring opening. The next step in perylenequinone biosynthesis is an O-methylation at the nascent OH-6 of the elcB product performed by the O-methyltransferase elcD. The oxidative coupling of the two monomeric naphthol units in perylenequinone biosynthesis is catalyzed by the FAD-dependent monooxygenase elcE and the multicopper oxidase elcG. ElcG might catalyze the first intermolecular coupling in a regio- and stereo-selective manner via a phenol radical coupling mechanism and the elcE could forge the second C-C bond intramolecularly via a hydride transfer mechanism. The fasciclin domain-containing protein elcF might also play a role duting this step. The last piece of the puzzle in the biosynthesis of elsinochrome C is the additional annulation by enolate coupling to afford the dihydrobenzo(ghi)perylenequinone system, catalyzed by the FAD-dependent monooxygenase elcH. This Phaeosphaeria nodorum (strain SN15 / ATCC MYA-4574 / FGSC 10173) (Glume blotch fungus) protein is O-methyltransferase elcB.